We begin with the raw amino-acid sequence, 108 residues long: MALFGSSAPAAAAPANSAEDVQQTKANLIAQLQQEMAMANAKKLISKVNQNCFENCITAPGSSLSASESTCLSSCMEKYIQFWNAASKAYIARATTQTVAANAMATEL.

Residues 52–75 (CFENCITAPGSSLSASESTCLSSC) carry the Twin CX3C motif motif. Intrachain disulfides connect Cys-52-Cys-75 and Cys-56-Cys-71.

This sequence belongs to the small Tim family. In terms of assembly, heterohexamer; composed of 3 copies of TIM8 and 3 copies of TIM13, named soluble 70 kDa complex. Associates with the TIM22 complex, whose core is composed of TIM22 and TIM54. Interacts with the transmembrane regions of multi-pass transmembrane proteins in transit.

The protein localises to the mitochondrion inner membrane. Mitochondrial intermembrane chaperone that participates in the import and insertion of some multi-pass transmembrane proteins into the mitochondrial inner membrane. Also required for the transfer of beta-barrel precursors from the TOM complex to the sorting and assembly machinery (SAM complex) of the outer membrane. Acts as a chaperone-like protein that protects the hydrophobic precursors from aggregation and guide them through the mitochondrial intermembrane space. The TIM8-TIM13 complex is non essential and only mediates the import of few proteins, while the predominant TIM9-TIM10 70 kDa complex is crucial and mediates the import of much more proteins. This is Mitochondrial import inner membrane translocase subunit tim13 (tim13) from Emericella nidulans (strain FGSC A4 / ATCC 38163 / CBS 112.46 / NRRL 194 / M139) (Aspergillus nidulans).